A 235-amino-acid chain; its full sequence is 5'-methylthioadenosine/S-adenosylhomocysteine nucleosidase (235 aa).

The active-site Proton acceptor is the glutamate 12. Residues glycine 78, isoleucine 152, and 173-174 (ME) each bind substrate. The active-site Proton donor is aspartate 197.

This sequence belongs to the PNP/UDP phosphorylase family. MtnN subfamily. As to quaternary structure, homodimer.

The enzyme catalyses S-adenosyl-L-homocysteine + H2O = S-(5-deoxy-D-ribos-5-yl)-L-homocysteine + adenine. The catalysed reaction is S-methyl-5'-thioadenosine + H2O = 5-(methylsulfanyl)-D-ribose + adenine. It catalyses the reaction 5'-deoxyadenosine + H2O = 5-deoxy-D-ribose + adenine. The protein operates within amino-acid biosynthesis; L-methionine biosynthesis via salvage pathway; S-methyl-5-thio-alpha-D-ribose 1-phosphate from S-methyl-5'-thioadenosine (hydrolase route): step 1/2. In terms of biological role, catalyzes the irreversible cleavage of the glycosidic bond in both 5'-methylthioadenosine (MTA) and S-adenosylhomocysteine (SAH/AdoHcy) to adenine and the corresponding thioribose, 5'-methylthioribose and S-ribosylhomocysteine, respectively. Also cleaves 5'-deoxyadenosine, a toxic by-product of radical S-adenosylmethionine (SAM) enzymes, into 5-deoxyribose and adenine. Thus, is required for in vivo function of the radical SAM enzymes biotin synthase and lipoic acid synthase, that are inhibited by 5'-deoxyadenosine accumulation. In Buchnera aphidicola subsp. Schizaphis graminum (strain Sg), this protein is 5'-methylthioadenosine/S-adenosylhomocysteine nucleosidase.